Here is an 833-residue protein sequence, read N- to C-terminus: DNA ligase (833 aa).

Residues 35–39, 84–85, and Glu-115 contribute to the NAD(+) site; these read DADYD and SL. Lys-117 serves as the catalytic N6-AMP-lysine intermediate. Arg-138, Glu-175, Lys-292, and Lys-316 together coordinate NAD(+). Zn(2+) is bound by residues Cys-410, Cys-413, Cys-428, and Cys-434. In terms of domain architecture, BRCT spans 750-833; the sequence is EKTGPLDGQT…AFLGDHGQQP (84 aa).

The protein belongs to the NAD-dependent DNA ligase family. LigA subfamily. Mg(2+) is required as a cofactor. It depends on Mn(2+) as a cofactor.

It carries out the reaction NAD(+) + (deoxyribonucleotide)n-3'-hydroxyl + 5'-phospho-(deoxyribonucleotide)m = (deoxyribonucleotide)n+m + AMP + beta-nicotinamide D-nucleotide.. Functionally, DNA ligase that catalyzes the formation of phosphodiester linkages between 5'-phosphoryl and 3'-hydroxyl groups in double-stranded DNA using NAD as a coenzyme and as the energy source for the reaction. It is essential for DNA replication and repair of damaged DNA. This chain is DNA ligase, found in Xanthomonas axonopodis pv. citri (strain 306).